We begin with the raw amino-acid sequence, 368 residues long: uncharacterized protein (368 aa).

The first 19 residues, 1–19 (MHVSMIIFVSIFSIKYIMA), serve as a signal peptide directing secretion. N-linked (GlcNAc...) asparagine; by host glycans are attached at residues Asn-99, Asn-170, Asn-266, and Asn-295.

This is an uncharacterized protein from Ostreid herpesvirus 1 (isolate France) (OsHV-1).